A 435-amino-acid polypeptide reads, in one-letter code: Glucoside xylosyltransferase 1 (435 aa).

Over 1–6 (MRRYLR) the chain is Cytoplasmic. A helical; Signal-anchor for type II membrane protein transmembrane segment spans residues 7–29 (VVGLCLACGFCSLLYAFSQLAVS). Residues 30 to 435 (LEEGAAVGRR…NRYDTPPKER (406 aa)) lie on the Lumenal side of the membrane. Asparagine 168 and asparagine 232 each carry an N-linked (GlcNAc...) asparagine glycan.

Belongs to the glycosyltransferase 8 family.

The protein localises to the membrane. It carries out the reaction 3-O-(beta-D-glucosyl)-L-seryl-[EGF-like domain protein] + UDP-alpha-D-xylose = 3-O-[alpha-D-xylosyl-(1-&gt;3)-beta-D-glucosyl]-L-seryl-[EGF-like domain protein] + UDP + H(+). Its function is as follows. Glycosyltransferase which elongates the O-linked glucose attached to EGF-like repeats in the extracellular domain of Notch proteins by catalyzing the addition of xylose. This is Glucoside xylosyltransferase 1 (Gxylt1) from Rattus norvegicus (Rat).